Reading from the N-terminus, the 425-residue chain is Apolipoprotein N-acyltransferase (425 aa).

The next 6 helical transmembrane spans lie at 12-32, 34-54, 60-80, 88-108, 120-140, and 142-162; these read LLACMFVSSVYVNAVLDAYAI, NPYISITLTSLLAPLSMLAFL, SAFALGFFVGALLFYWCALSF, LLPLIIVLIALVYGVLFYLLL, FLGSSFIHPFGFDWLVPDSFF, and YSVFRVDKLSLGLVFLACIFL. The CN hydrolase domain maps to 201–425; it reads VSTKTPQDLK…LGDILFRKRS (225 aa). Glu242 functions as the Proton acceptor in the catalytic mechanism. Residue Lys296 is part of the active site. The active-site Nucleophile is the Cys349.

It belongs to the CN hydrolase family. Apolipoprotein N-acyltransferase subfamily.

It is found in the cell inner membrane. It carries out the reaction N-terminal S-1,2-diacyl-sn-glyceryl-L-cysteinyl-[lipoprotein] + a glycerophospholipid = N-acyl-S-1,2-diacyl-sn-glyceryl-L-cysteinyl-[lipoprotein] + a 2-acyl-sn-glycero-3-phospholipid + H(+). It functions in the pathway protein modification; lipoprotein biosynthesis (N-acyl transfer). Its function is as follows. Catalyzes the phospholipid dependent N-acylation of the N-terminal cysteine of apolipoprotein, the last step in lipoprotein maturation. This Helicobacter pylori (strain ATCC 700392 / 26695) (Campylobacter pylori) protein is Apolipoprotein N-acyltransferase.